A 212-amino-acid polypeptide reads, in one-letter code: Cytidylate kinase (212 aa).

Residue 7–15 (GPAASGKGT) coordinates ATP.

This sequence belongs to the cytidylate kinase family. Type 1 subfamily.

Its subcellular location is the cytoplasm. It catalyses the reaction CMP + ATP = CDP + ADP. It carries out the reaction dCMP + ATP = dCDP + ADP. This chain is Cytidylate kinase, found in Rhodopseudomonas palustris (strain TIE-1).